Consider the following 233-residue polypeptide: MILIASPFSLAHLEYLHTWHVTIKNIAQQHGLDIKVAIVVSTSHLNTFLPISTALNIECITFPGCGIKEIDLLWARIKLFQHYCAIGARLLWLVSADIRPPVSTWPAIADSLKKGADAVVIPYPSRWNNLIPTVIKEIVVHQKKCLVAVDARHLDTDTQIVGAGMGCIVLTLKALMVRLSIGKQPIKILWPDLHGTAEGIPLEGVEVGWFLNAYAHKLNIRCLGADHIAQHLT.

It belongs to the asfivirus H233R family.

This is an uncharacterized protein from African swine fever virus (isolate Tick/South Africa/Pretoriuskop Pr4/1996) (ASFV).